A 482-amino-acid polypeptide reads, in one-letter code: ATP synthase subunit beta (482 aa).

167–174 (GGAGVGKT) is an ATP binding site.

This sequence belongs to the ATPase alpha/beta chains family. F-type ATPases have 2 components, CF(1) - the catalytic core - and CF(0) - the membrane proton channel. CF(1) has five subunits: alpha(3), beta(3), gamma(1), delta(1), epsilon(1). CF(0) has three main subunits: a(1), b(2) and c(9-12). The alpha and beta chains form an alternating ring which encloses part of the gamma chain. CF(1) is attached to CF(0) by a central stalk formed by the gamma and epsilon chains, while a peripheral stalk is formed by the delta and b chains.

It is found in the cell membrane. It carries out the reaction ATP + H2O + 4 H(+)(in) = ADP + phosphate + 5 H(+)(out). Produces ATP from ADP in the presence of a proton gradient across the membrane. The catalytic sites are hosted primarily by the beta subunits. The sequence is that of ATP synthase subunit beta from Corynebacterium aurimucosum (strain ATCC 700975 / DSM 44827 / CIP 107346 / CN-1) (Corynebacterium nigricans).